Here is a 170-residue protein sequence, read N- to C-terminus: Urease accessory protein UreE (170 aa).

Belongs to the UreE family.

The protein resides in the cytoplasm. Its function is as follows. Involved in urease metallocenter assembly. Binds nickel. Probably functions as a nickel donor during metallocenter assembly. The polypeptide is Urease accessory protein UreE (Helicobacter pylori (strain HPAG1)).